The primary structure comprises 575 residues: MTEYENGKKRKVRNKQQVKVQFLSQRYLILCFCCFFVLLFFLSSDRISTLSVRSDSLRPSLRVPTLSVLSSSMDSFHRGRFPPLSVEDRVQFPDHLLLILSHGIGKGEKNLVCVYRGVKEETLVLPSISSDEFDEFRSIVRCPNAPLNYSSSVDLQFRGDLVKKKMKKQSRRVHNWEKVGYEAVIDGDTVVVFVKGLTRRPHKESDPSYYKCQFEIENSEEKEVTQAIAAAQEVVRCGLPESLKLNPEMMFRVSVIHIDPRGRTTPALPSVARIYGSDSIEKKEKKSGVKHELCVCTMLWNQAPFLREWIMYHSWLGVERWFIYDNNSDDGIQEEIELLSSENYNVSRHVWPWIKTQEAGFSHCAVRAKEECNWVGFFDVDEFYYFPTHRSQGLPSKNALKSLVSNYTSWDLVGEIRTDCHSYGPSGLTSVPSQGVTVGYTCRQANPERHKSIIRPELLTSSLLNEVHHFQLKEGVGHMSLVESVAVVNHYKYQVWDTFKAKFYRRVATYVVDWQENQNQGSKDRAPGLGTEAIEPPDWKRRFCEVWDTGLKDLVMSNFADQVTGYLPWQRQQQE.

Residues 22 to 44 (FLSQRYLILCFCCFFVLLFFLSS) form a helical membrane-spanning segment. The GT92 domain maps to 293 to 540 (LCVCTMLWNQ…TEAIEPPDWK (248 aa)).

The protein belongs to the glycosyltransferase 92 family.

Its subcellular location is the membrane. In Arabidopsis thaliana (Mouse-ear cress), this protein is Glycosyltransferase family 92 protein At1g27200.